We begin with the raw amino-acid sequence, 122 residues long: Large ribosomal subunit protein uL14 (122 aa).

Belongs to the universal ribosomal protein uL14 family. As to quaternary structure, part of the 50S ribosomal subunit. Forms a cluster with proteins L3 and L19. In the 70S ribosome, L14 and L19 interact and together make contacts with the 16S rRNA in bridges B5 and B8.

In terms of biological role, binds to 23S rRNA. Forms part of two intersubunit bridges in the 70S ribosome. The chain is Large ribosomal subunit protein uL14 from Saccharopolyspora erythraea (strain ATCC 11635 / DSM 40517 / JCM 4748 / NBRC 13426 / NCIMB 8594 / NRRL 2338).